The chain runs to 1378 residues: DNA-directed RNA polymerase subunit beta (1378 aa).

The protein belongs to the RNA polymerase beta chain family. As to quaternary structure, the RNAP catalytic core consists of 2 alpha, 1 beta, 1 beta' and 1 omega subunit. When a sigma factor is associated with the core the holoenzyme is formed, which can initiate transcription.

It catalyses the reaction RNA(n) + a ribonucleoside 5'-triphosphate = RNA(n+1) + diphosphate. DNA-dependent RNA polymerase catalyzes the transcription of DNA into RNA using the four ribonucleoside triphosphates as substrates. The chain is DNA-directed RNA polymerase subunit beta from Campylobacter jejuni subsp. jejuni serotype O:23/36 (strain 81-176).